Reading from the N-terminus, the 86-residue chain is Phosphocarrier protein HPr (86 aa).

Residues 1–86 (MVKKEAIIKA…LAELIESFKE (86 aa)) form the HPr domain. His-15 acts as the Pros-phosphohistidine intermediate in catalysis.

The protein belongs to the HPr family.

It localises to the cytoplasm. In terms of biological role, general (non sugar-specific) component of the phosphoenolpyruvate-dependent sugar phosphotransferase system (sugar PTS). This major carbohydrate active-transport system catalyzes the phosphorylation of incoming sugar substrates concomitantly with their translocation across the cell membrane. The phosphoryl group from phosphoenolpyruvate (PEP) is transferred to the phosphoryl carrier protein HPr by enzyme I. Phospho-HPr then transfers it to the PTS EIIA domain. This chain is Phosphocarrier protein HPr (ptsH), found in Borreliella burgdorferi (strain ATCC 35210 / DSM 4680 / CIP 102532 / B31) (Borrelia burgdorferi).